The chain runs to 393 residues: Acetate kinase (393 aa).

A Mg(2+)-binding site is contributed by Asn8. Lys15 contributes to the ATP binding site. Arg91 serves as a coordination point for substrate. The active-site Proton donor/acceptor is the Asp148. ATP is bound by residues 206 to 210, 280 to 282, and 325 to 329; these read HLGSG, DMR, and GVGEN. Mg(2+) is bound at residue Glu376.

Belongs to the acetokinase family. Homodimer. Requires Mg(2+) as cofactor. It depends on Mn(2+) as a cofactor.

Its subcellular location is the cytoplasm. The enzyme catalyses acetate + ATP = acetyl phosphate + ADP. It participates in metabolic intermediate biosynthesis; acetyl-CoA biosynthesis; acetyl-CoA from acetate: step 1/2. In terms of biological role, catalyzes the formation of acetyl phosphate from acetate and ATP. Can also catalyze the reverse reaction. This Rhizobium meliloti (Ensifer meliloti) protein is Acetate kinase.